Consider the following 96-residue polypeptide: Small ribosomal subunit protein bS16 (96 aa).

Belongs to the bacterial ribosomal protein bS16 family.

The polypeptide is Small ribosomal subunit protein bS16 (Vesicomyosocius okutanii subsp. Calyptogena okutanii (strain HA)).